The sequence spans 94 residues: Putative regulatory protein Tmel_0100 (94 aa).

Belongs to the RemA family.

The chain is Putative regulatory protein Tmel_0100 from Thermosipho melanesiensis (strain DSM 12029 / CIP 104789 / BI429).